Consider the following 680-residue polypeptide: DNA-directed RNA polymerase subunit beta' (680 aa).

The Zn(2+) site is built by Cys-69, Cys-71, Cys-87, and Cys-90. Residues Asp-489, Asp-491, and Asp-493 each contribute to the Mg(2+) site.

The protein belongs to the RNA polymerase beta' chain family. RpoC1 subfamily. As to quaternary structure, in plastids the minimal PEP RNA polymerase catalytic core is composed of four subunits: alpha, beta, beta', and beta''. When a (nuclear-encoded) sigma factor is associated with the core the holoenzyme is formed, which can initiate transcription. Mg(2+) is required as a cofactor. The cofactor is Zn(2+).

It localises to the plastid. Its subcellular location is the chloroplast. The catalysed reaction is RNA(n) + a ribonucleoside 5'-triphosphate = RNA(n+1) + diphosphate. Its function is as follows. DNA-dependent RNA polymerase catalyzes the transcription of DNA into RNA using the four ribonucleoside triphosphates as substrates. In Aethionema cordifolium (Lebanon stonecress), this protein is DNA-directed RNA polymerase subunit beta'.